The primary structure comprises 762 residues: 5-methyltetrahydropteroyltriglutamate--homocysteine methyltransferase (762 aa).

5-methyltetrahydropteroyltri-L-glutamate-binding positions include 17-20 (REWK) and Lys111. L-homocysteine is bound by residues 435–437 (IGS) and Glu488. L-methionine is bound by residues 435–437 (IGS) and Glu488. Residues 519-520 (RC) and Trp565 contribute to the 5-methyltetrahydropteroyltri-L-glutamate site. Asp603 lines the L-homocysteine pocket. Asp603 serves as a coordination point for L-methionine. Residue Glu609 participates in 5-methyltetrahydropteroyltri-L-glutamate binding. Residues His645, Cys647, and Glu669 each coordinate Zn(2+). His698 acts as the Proton donor in catalysis. Cys730 provides a ligand contact to Zn(2+).

Belongs to the vitamin-B12 independent methionine synthase family. Zn(2+) is required as a cofactor.

It carries out the reaction 5-methyltetrahydropteroyltri-L-glutamate + L-homocysteine = tetrahydropteroyltri-L-glutamate + L-methionine. Its pathway is amino-acid biosynthesis; L-methionine biosynthesis via de novo pathway; L-methionine from L-homocysteine (MetE route): step 1/1. Its function is as follows. Catalyzes the transfer of a methyl group from 5-methyltetrahydrofolate to homocysteine resulting in methionine formation. In Bacillus thuringiensis subsp. konkukian (strain 97-27), this protein is 5-methyltetrahydropteroyltriglutamate--homocysteine methyltransferase.